Here is a 770-residue protein sequence, read N- to C-terminus: Pheromone-regulated membrane protein 10 (770 aa).

2 disordered regions span residues 1–125 (MDGR…DGDD) and 139–169 (NQGG…RNEE). 2 stretches are compositionally biased toward polar residues: residues 49-63 (SGKS…NNDN) and 78-93 (DLSS…SKGT). The segment covering 155 to 169 (ENGKDDIEKNNRNEE) has biased composition (basic and acidic residues). 10 helical membrane passes run 453–473 (WMCV…AFGG), 475–495 (WVNL…QFIL), 505–525 (VFEI…GSIP), 529–549 (ICFG…YIIL), 568–588 (FYAI…SALF), 604–624 (LISP…ISLL), 629–649 (ISQL…TYWA), 659–679 (FTAA…SRIW), 681–701 (GLAV…GIAS), and 740–760 (IQVC…VYPF).

The protein belongs to the ThrE exporter (TC 2.A.79) family.

The protein localises to the membrane. The sequence is that of Pheromone-regulated membrane protein 10 (PRM10) from Saccharomyces cerevisiae (strain YJM789) (Baker's yeast).